The primary structure comprises 382 residues: S-adenosylmethionine synthase (382 aa).

Position 16 (histidine 16) interacts with ATP. Aspartate 18 provides a ligand contact to Mg(2+). Glutamate 44 provides a ligand contact to K(+). L-methionine-binding residues include glutamate 57 and glutamine 100. Positions 100–110 (QSPDIAQGVDN) are flexible loop. ATP is bound by residues 165-167 (DAK), 231-232 (RF), aspartate 240, 246-247 (RK), and lysine 267. Aspartate 240 serves as a coordination point for L-methionine. Lysine 271 is a binding site for L-methionine.

It belongs to the AdoMet synthase family. As to quaternary structure, homotetramer; dimer of dimers. Mg(2+) is required as a cofactor. K(+) serves as cofactor.

It localises to the cytoplasm. It carries out the reaction L-methionine + ATP + H2O = S-adenosyl-L-methionine + phosphate + diphosphate. It participates in amino-acid biosynthesis; S-adenosyl-L-methionine biosynthesis; S-adenosyl-L-methionine from L-methionine: step 1/1. Its function is as follows. Catalyzes the formation of S-adenosylmethionine (AdoMet) from methionine and ATP. The overall synthetic reaction is composed of two sequential steps, AdoMet formation and the subsequent tripolyphosphate hydrolysis which occurs prior to release of AdoMet from the enzyme. This chain is S-adenosylmethionine synthase, found in Legionella pneumophila subsp. pneumophila (strain Philadelphia 1 / ATCC 33152 / DSM 7513).